Here is a 471-residue protein sequence, read N- to C-terminus: Putative F-box protein At5g36200 (471 aa).

In terms of domain architecture, F-box spans 1–46 (MAMSDLPNDLVEEIISRVPVKSIRAVSSTCKNWNTLSNDHSFTRKL).

The chain is Putative F-box protein At5g36200 from Arabidopsis thaliana (Mouse-ear cress).